Here is a 500-residue protein sequence, read N- to C-terminus: Plasma protease C1 inhibitor (500 aa).

The signal sequence occupies residues 1–22; it reads MASRLTLLTLLLLLLAGDRASS. Low complexity predominate over residues 20–31; sequence ASSNPNATSSSS. Positions 20-43 are disordered; the sequence is ASSNPNATSSSSQDPESLQDRGEG. An N-linked (GlcNAc...) (complex) asparagine glycan is attached at Asn-25. Thr-47 and Thr-48 each carry an O-linked (GalNAc...) threonine glycan. Ser-64 carries an O-linked (GalNAc...) serine glycan. Positions 65–118 are disordered; sequence LPTTNSTTNSATKITANTTDEPTTQPTTEPTTQPTIQPTQPTTQLPTDSPTQPT. Over residues 67 to 118 the composition is skewed to low complexity; it reads TTNSTTNSATKITANTTDEPTTQPTTEPTTQPTIQPTQPTTQLPTDSPTQPT. An N-linked (GlcNAc...) asparagine glycan is attached at Asn-69. Thr-71 is a glycosylation site (O-linked (GalNAc...) threonine). The N-linked (GlcNAc...) asparagine glycan is linked to Asn-81. Thr-83, Thr-88, Thr-92, and Thr-96 each carry an O-linked (GalNAc...) threonine glycan. 7 tandem repeats follow at residues 85–88, 89–92, 93–96, 97–100, 101–104, 105–108, and 116–119. The interval 85–119 is 7 X 4 AA tandem repeats of [QE]-P-T-[TQ]; sequence EPTTQPTTEPTTQPTIQPTQPTTQLPTDSPTQPTT. 2 disulfides stabilise this stretch: Cys-123–Cys-428 and Cys-130–Cys-205. Asn-238 and Asn-253 each carry an N-linked (GlcNAc...) (complex) asparagine glycan. Residue Asn-272 is glycosylated (N-linked (GlcNAc...) asparagine; in variant TA). Asn-352 carries N-linked (GlcNAc...) (complex) asparagine glycosylation.

It belongs to the serpin family. In terms of assembly, interacts with MASP1. As to quaternary structure, (Microbial infection) Binds to E.coli stcE which allows localization of SERPING1 to cell membranes thus protecting the bacteria against complement-mediated lysis. In terms of processing, highly glycosylated (49%) with N- and O-glycosylation. O-glycosylated with core 1 or possibly core 8 glycans. N-glycan heterogeneity at Asn-25: Hex5HexNAc4 (minor), dHex1Hex5HexNAc4 (minor), Hex6HexNAc5 (major) and dHex1Hex6HexNAc5 (minor). Post-translationally, cleaved by C1S in vitro. (Microbial infection) Can be proteolytically cleaved by E.coli stcE.

It localises to the secreted. Its function is as follows. Serine protease inhibitor, which acrs as a regulator of the classical complement pathway. Forms a proteolytically inactive stoichiometric complex with the C1r or C1s proteases. May also regulate blood coagulation, fibrinolysis and the generation of kinins. Very efficient inhibitor of FXIIa. Inhibits chymotrypsin and kallikrein. This chain is Plasma protease C1 inhibitor (SERPING1), found in Homo sapiens (Human).